The primary structure comprises 429 residues: Glutamate-1-semialdehyde 2,1-aminomutase 1 (429 aa).

N6-(pyridoxal phosphate)lysine is present on Lys268.

This sequence belongs to the class-III pyridoxal-phosphate-dependent aminotransferase family. HemL subfamily. In terms of assembly, homodimer. It depends on pyridoxal 5'-phosphate as a cofactor.

The protein resides in the cytoplasm. The catalysed reaction is (S)-4-amino-5-oxopentanoate = 5-aminolevulinate. It functions in the pathway porphyrin-containing compound metabolism; protoporphyrin-IX biosynthesis; 5-aminolevulinate from L-glutamyl-tRNA(Glu): step 2/2. The polypeptide is Glutamate-1-semialdehyde 2,1-aminomutase 1 (Staphylococcus haemolyticus (strain JCSC1435)).